A 431-amino-acid chain; its full sequence is Mannan endo-1,4-beta-mannosidase 7 (431 aa).

The signal sequence occupies residues 1 to 25; the sequence is MKLLALFPFLAIVIQLSCWELGTDA. Residues Trp-87 and Asn-202 each coordinate substrate. The Proton donor role is filled by Glu-203. Position 280 (Tyr-280) interacts with substrate. Catalysis depends on Glu-320, which acts as the Nucleophile. Residue Trp-362 participates in substrate binding.

This sequence belongs to the glycosyl hydrolase 5 (cellulase A) family. In terms of tissue distribution, expressed in stems, flowers, siliques and seeds. Expressed in root vasculature, leaf hydathodes, anther filaments, stigma, sepal vasculature, at the base and apical parts of siliques, and replum. Expressed in the micropylar endosperm and radicle tip in early germinating seeds.

Its subcellular location is the secreted. The catalysed reaction is Random hydrolysis of (1-&gt;4)-beta-D-mannosidic linkages in mannans, galactomannans and glucomannans.. Required for both, loosening of the micropylar endosperm, and rupture of the seed coat in germinating seeds. May participate in the hydrolysis of the mannans in the cell wall of germinating seeds. The polypeptide is Mannan endo-1,4-beta-mannosidase 7 (MAN7) (Arabidopsis thaliana (Mouse-ear cress)).